Consider the following 273-residue polypeptide: 2,3,4,5-tetrahydropyridine-2,6-dicarboxylate N-succinyltransferase (273 aa).

Arg-104 and Asp-141 together coordinate substrate.

It belongs to the transferase hexapeptide repeat family. As to quaternary structure, homotrimer.

It localises to the cytoplasm. The enzyme catalyses (S)-2,3,4,5-tetrahydrodipicolinate + succinyl-CoA + H2O = (S)-2-succinylamino-6-oxoheptanedioate + CoA. It functions in the pathway amino-acid biosynthesis; L-lysine biosynthesis via DAP pathway; LL-2,6-diaminopimelate from (S)-tetrahydrodipicolinate (succinylase route): step 1/3. In Thioalkalivibrio sulfidiphilus (strain HL-EbGR7), this protein is 2,3,4,5-tetrahydropyridine-2,6-dicarboxylate N-succinyltransferase.